A 410-amino-acid polypeptide reads, in one-letter code: Meiotic driver wtf18 (410 aa).

The interval Met1–Ser39 is disordered. Positions Ser11–Pro29 are enriched in basic and acidic residues. 10 consecutive transmembrane segments (helical) span residues Leu89–Pro109, Ala119–Phe139, Cys149–Ala169, Val174–Ile194, Cys204–Tyr224, Asp229–Val249, Cys265–Leu285, Leu289–Leu309, Ala319–Tyr339, and Phe353–Gly373.

This sequence belongs to the WTF family. Homomer. Forms protein aggregates. The two isoforms can interact with each other and with themselves. High sequence similarity is required for their interaction.

Its subcellular location is the spore membrane. The protein resides in the vacuole membrane. It localises to the ascus epiplasm. It is found in the cytoplasm. The protein localises to the endoplasmic reticulum membrane. Functionally, promotes unequal transmission of alleles from the parental zygote to progeny spores by acting as poison/antidote system where the poison and antidote proteins are produced from the same locus; the poison component is trans-acting and targets all spores within an ascus whereas the antidote component is spore-specific, leading to poisoning of all progeny that do not inherit the allele. In terms of biological role, localizes isoform 2 to the vacuole thereby facilitating its degradation. In addition to suppressing isoform 2, also suppresses S.pombe strain 972 wtf13 isoform 2. Its function is as follows. Forms toxic aggregates that disrupt spore maturation. The chain is Meiotic driver wtf18 from Schizosaccharomyces pombe (Fission yeast).